A 186-amino-acid polypeptide reads, in one-letter code: Phosphoheptose isomerase (186 aa).

The SIS domain maps to 33–186 (LCECLKKGGK…TLCQIIDEGF (154 aa)). Residue 48–50 (NGG) participates in substrate binding. Residues His-57 and Glu-61 each contribute to the Zn(2+) site. Substrate-binding positions include Glu-61, 90-91 (ND), 116-118 (STS), Ser-121, and Gln-168. 2 residues coordinate Zn(2+): Gln-168 and His-176.

Belongs to the SIS family. GmhA subfamily. In terms of assembly, homotetramer. It depends on Zn(2+) as a cofactor.

The protein localises to the cytoplasm. It carries out the reaction 2 D-sedoheptulose 7-phosphate = D-glycero-alpha-D-manno-heptose 7-phosphate + D-glycero-beta-D-manno-heptose 7-phosphate. Its pathway is carbohydrate biosynthesis; D-glycero-D-manno-heptose 7-phosphate biosynthesis; D-glycero-alpha-D-manno-heptose 7-phosphate and D-glycero-beta-D-manno-heptose 7-phosphate from sedoheptulose 7-phosphate: step 1/1. Its function is as follows. Catalyzes the isomerization of sedoheptulose 7-phosphate in D-glycero-D-manno-heptose 7-phosphate. The protein is Phosphoheptose isomerase of Campylobacter jejuni subsp. jejuni serotype O:6 (strain 81116 / NCTC 11828).